We begin with the raw amino-acid sequence, 1336 residues long: Mating factor M secretion protein mam1 (1336 aa).

Residues 1-29 (MHIHSDLSLPQFEHASIDPPSYSPQKSSF) form a disordered region. Residues 1–91 (MHIHSDLSLP…ELAGVSSWSD (91 aa)) are Cytoplasmic-facing. A helical transmembrane segment spans residues 92 to 112 (FFYLFHFSDIPLIFGTLIFTC). In terms of domain architecture, ABC transmembrane type-1 1 spans 104-396 (IFGTLIFTCL…ILPAIPDLIK (293 aa)). The Extracellular portion of the chain corresponds to 113 to 153 (LSAALEPLMTWTTGKVFDALSQYATSQITLGKMISLINFNS). Residues 154–174 (LLITIFGLASCVFSFGVRFLW) form a helical membrane-spanning segment. Residues 175–250 (QYLSAIAGKR…SCLIISFRYS (76 aa)) are Cytoplasmic-facing. Residues 251–271 (WSLTLVVLASYPIIILVVGFI) traverse the membrane as a helical segment. The Extracellular portion of the chain corresponds to 272–778 (NSFLSSAYEK…KSIWKVKKLR (507 aa)). Residues 433–668 (FRFDNVSFAY…EDFENNVSID (236 aa)) enclose the ABC transporter 1 domain. N-linked (GlcNAc...) asparagine glycans are attached at residues asparagine 437 and asparagine 454. Residue 469–476 (GPSGSGKS) coordinates ATP. Residues asparagine 536, asparagine 664, and asparagine 697 are each glycosylated (N-linked (GlcNAc...) asparagine). A helical transmembrane segment spans residues 779–799 (WFFLLGLLTSLIQGASVPIFA). One can recognise an ABC transmembrane type-1 2 domain in the interval 781–1066 (FLLGLLTSLI…CIMSLPNVSA (286 aa)). Residues 800 to 897 (YVISKCLNLF…ISDMRNMISS (98 aa)) lie on the Cytoplasmic side of the membrane. Residues 898–918 (LIEEVFIAFTMAIIGIAWSFA) form a helical membrane-spanning segment. Over 919–1336 (TGWRLAAVLV…KLIHRGEWIE (418 aa)) the chain is Extracellular. Residues asparagine 1011, asparagine 1063, and asparagine 1120 are each glycosylated (N-linked (GlcNAc...) asparagine). An ABC transporter 2 domain is found at 1099–1331 (IEFDGVSFAY…HTHFWKLIHR (233 aa)). Residue 1135-1142 (GISGSGKS) participates in ATP binding. Asparagine 1235 and asparagine 1280 each carry an N-linked (GlcNAc...) asparagine glycan.

Belongs to the ABC transporter superfamily. Alpha-factor sex pheromone exporter (TC 3.A.1.206) family.

Its subcellular location is the membrane. Its function is as follows. Required in S.pombe M (minus) cells for production of M-factor pheromone. Involved in the transport of the farnesyl-derivation of the M-factor pheromone. This Schizosaccharomyces pombe (strain 972 / ATCC 24843) (Fission yeast) protein is Mating factor M secretion protein mam1 (mam1).